A 194-amino-acid chain; its full sequence is uncharacterized protein (194 aa).

Residues 1 to 22 (MNKVTKTAIAGLLALFAGNAAA) form the signal peptide. Cys-38 and Cys-78 form a disulfide bridge.

This sequence belongs to the fimbrial protein family.

The protein localises to the fimbrium. Its function is as follows. Part of the yraHIJK fimbrial operon. Could contribute to adhesion to various surfaces in specific environmental niches. Increases adhesion to eukaryotic T24 bladder epithelial cells in the absence of fim operon. This is an uncharacterized protein from Escherichia coli (strain K12).